We begin with the raw amino-acid sequence, 301 residues long: Acidic endochitinase (301 aa).

An N-terminal signal peptide occupies residues 1 to 25 (MARTPQSTPLLISLSVLALLQTSYA). The region spanning 26–301 (GGIAIYWGQN…GYSSSIKSSV (276 aa)) is the GH18 domain. Intrachain disulfides connect Cys45–Cys92 and Cys75–Cys82. Glu152 acts as the Proton donor in catalysis. An intrachain disulfide couples Cys187 to Cys216.

This sequence belongs to the glycosyl hydrolase 18 family. Chitinase class II subfamily.

It catalyses the reaction Random endo-hydrolysis of N-acetyl-beta-D-glucosaminide (1-&gt;4)-beta-linkages in chitin and chitodextrins.. In terms of biological role, defense against chitin containing fungal pathogens. This is Acidic endochitinase (CHIT3) from Vitis vinifera (Grape).